A 365-amino-acid chain; its full sequence is Medium chain reductase pydE (365 aa).

An Enoyl reductase (ER) domain is found at 21 to 362 (KLIDSLPVPP…SKRARGKVLI (342 aa)). Residues 185–188 (SGSV), tyrosine 226, 274–275 (IG), and 354–355 (KR) contribute to the NADP(+) site.

This sequence belongs to the zinc-containing alcohol dehydrogenase family. Monomer.

The protein operates within mycotoxin biosynthesis. Its function is as follows. Medium chain reductase; part of the gene cluster that mediates the biosynthesis of pyrrocidines, fungal natural products containing a macrocyclic para-cyclophane connected to a decahydrofluorene ring system that show potent antibiotic activities toward Gram-negative bacteria. Within the pathway, pydE functions synergistically with pydB, pydX and pydZ to form the cyclophane. The pathway begins with the PKS-NRPS pydA which, with the help of the trans-enoyl reductase pydC, synthesizes the polyketide-tyrosyl acyl thioester product which can be reductively off-loaded by the terminal reductase (R) domain in pydA. The alpha/beta hydrolase pydG is then required to catalyze the subsequent Knoevenagel condensation that affords the 3-pyrrolin-2-one ring, whereas the four proteins pydB, pydE, pydX and pydZ then function synergistically to form the cyclophane. PydB and the membrane-bound pydX and pydZ are lipid-binding proteins that can sequester and mold the pdyG product into the inverse S-shape. Binding of the medium chain reductase pydE to the complex would trigger the cascade oxidative cyclization. PydY is involved in the Diels-Alder cycloaddition that forms the decahydrofluorene core. Additional non-enzymatic hydroxylation yields pyrrocidine A2 which can be further reduced into pyrrocidine B by an endogenous reductase. The chain is Medium chain reductase pydE from Acremonium sp.